Consider the following 226-residue polypeptide: Peroxiredoxin-like 2C (226 aa).

It belongs to the peroxiredoxin-like PRXL2 family. PRXL2C subfamily. Expressed in gastric tissues.

In terms of biological role, may positively regulate ERK1/2 signaling and AKT1 activation leading to HIF1A up-regulation with an increased expression of glycolysis genes and enhanced glycolysis. This Homo sapiens (Human) protein is Peroxiredoxin-like 2C.